Reading from the N-terminus, the 124-residue chain is MAFKVVVSDTKSGKSYQFETESTALIGKKIGDEISGSVVELEGYKLKITGGSDKCGFAMRHDIHGAMKMRVLLKNGPGYNVKEKGLRRRKSLRGNTISKDVTLINTKVVEYGPAPLGGEPENTE.

This sequence belongs to the eukaryotic ribosomal protein eS6 family.

The polypeptide is Small ribosomal subunit protein eS6 (Methanococcus maripaludis (strain C6 / ATCC BAA-1332)).